A 352-amino-acid polypeptide reads, in one-letter code: Ribosomal RNA large subunit methyltransferase M (352 aa).

S-adenosyl-L-methionine contacts are provided by residues serine 184, 217–220, aspartate 236, aspartate 256, and aspartate 272; that span reads APGG. Lysine 301 serves as the catalytic Proton acceptor.

The protein belongs to the class I-like SAM-binding methyltransferase superfamily. RNA methyltransferase RlmE family. RlmM subfamily. Monomer.

It localises to the cytoplasm. The catalysed reaction is cytidine(2498) in 23S rRNA + S-adenosyl-L-methionine = 2'-O-methylcytidine(2498) in 23S rRNA + S-adenosyl-L-homocysteine + H(+). Catalyzes the 2'-O-methylation at nucleotide C2498 in 23S rRNA. This is Ribosomal RNA large subunit methyltransferase M from Pseudomonas paraeruginosa (strain DSM 24068 / PA7) (Pseudomonas aeruginosa (strain PA7)).